A 100-amino-acid polypeptide reads, in one-letter code: Large ribosomal subunit protein uL23 (100 aa).

It belongs to the universal ribosomal protein uL23 family. Part of the 50S ribosomal subunit. Contacts protein L29, and trigger factor when it is bound to the ribosome.

Its function is as follows. One of the early assembly proteins it binds 23S rRNA. One of the proteins that surrounds the polypeptide exit tunnel on the outside of the ribosome. Forms the main docking site for trigger factor binding to the ribosome. This is Large ribosomal subunit protein uL23 from Idiomarina loihiensis (strain ATCC BAA-735 / DSM 15497 / L2-TR).